A 975-amino-acid polypeptide reads, in one-letter code: Kinesin-like protein KIN-14K (975 aa).

Residues 1–40 are disordered; the sequence is MKNRIKKGSSMIGVYGRSDGSSSIQSSNGSESRESIDDNK. Residues 17 to 30 are compositionally biased toward low complexity; the sequence is RSDGSSSIQSSNGS. Residues 31–40 show a composition bias toward basic and acidic residues; the sequence is ESRESIDDNK. The region spanning 40-143 is the Calponin-homology (CH) domain; that stretch reads KQGHQSLVEW…SLKALKASFS (104 aa). Positions 289-345 form a coiled coil; the sequence is KERSNAELSKLKQELEIVKETHEKQFLELKLNAQKAKVELERQVKNSELRVVEAKEL. A Kinesin motor domain is found at 436-746; it reads NIRVYCRIRP…LKFAERVSGV (311 aa). 520–527 lines the ATP pocket; it reads GQTGSGKT. Residues 757 to 788 are a coiled coil; sequence GRDVRQLMEQVSNLKDMIAKKDEELQKFQNIN. Disordered stretches follow at residues 801–852 and 900–975; these read VSPP…GAKD and LFPE…NRKR. Positions 944–958 are enriched in low complexity; it reads LSISTTSSKALTSSK.

The protein belongs to the TRAFAC class myosin-kinesin ATPase superfamily. Kinesin family. KIN-14 subfamily.

In Arabidopsis thaliana (Mouse-ear cress), this protein is Kinesin-like protein KIN-14K.